We begin with the raw amino-acid sequence, 187 residues long: Ribosome-recycling factor (187 aa).

The protein belongs to the RRF family.

It localises to the cytoplasm. Functionally, responsible for the release of ribosomes from messenger RNA at the termination of protein biosynthesis. May increase the efficiency of translation by recycling ribosomes from one round of translation to another. The polypeptide is Ribosome-recycling factor (Paracoccus denitrificans (strain Pd 1222)).